Reading from the N-terminus, the 412-residue chain is Putative competence-damage inducible protein (412 aa).

This sequence belongs to the CinA family.

This chain is Putative competence-damage inducible protein, found in Clostridium perfringens (strain 13 / Type A).